The primary structure comprises 66 residues: Jindongenin-1a (66 aa).

A signal peptide spans 1-22 (MFTLKKPLLLLFFLGTVSLSLC). A propeptide spanning residues 23 to 40 (EQERAADDDEGEVIEEEV) is cleaved from the precursor. A disulfide bridge connects residues cysteine 60 and cysteine 66.

Expressed by the skin glands.

Its subcellular location is the secreted. Displays broad-spectrum antibacterial activity against a range of Gram-positive and Gram-negative bacteria. Also displays antifungal activity against C.albicans ATCC 2002. Has low hemolytic activity, low cytotoxicity and low antioxidant activity. This chain is Jindongenin-1a, found in Amolops jingdongensis (Chinese torrent frog).